The primary structure comprises 192 residues: MPDLILASSSPYRRELLTRLRLPFESASPDIDESHRAGESAEELVRRLSASKAEALAGRYPQHLVIGSDQVAVLDGNILGKPHTPERAIQQLRDASGKSVTFLTGLALLNSASRRIQVACVPFTVHFRHLDESRIRRYVEAERPLDCAGSFKAEGLGVSLFRSTEGEDATSLVGLPLIRLVDMLLEEGVEIP.

The active-site Proton acceptor is the Asp69.

Belongs to the Maf family. YceF subfamily. A divalent metal cation is required as a cofactor.

The protein resides in the cytoplasm. The enzyme catalyses N(7)-methyl-GTP + H2O = N(7)-methyl-GMP + diphosphate + H(+). Its function is as follows. Nucleoside triphosphate pyrophosphatase that hydrolyzes 7-methyl-GTP (m(7)GTP). May have a dual role in cell division arrest and in preventing the incorporation of modified nucleotides into cellular nucleic acids. This is 7-methyl-GTP pyrophosphatase from Pseudomonas aeruginosa (strain ATCC 15692 / DSM 22644 / CIP 104116 / JCM 14847 / LMG 12228 / 1C / PRS 101 / PAO1).